The sequence spans 701 residues: Polyribonucleotide nucleotidyltransferase (701 aa).

Mg(2+) is bound by residues D487 and D493. Positions 554–613 constitute a KH domain; that stretch reads PTMIAMKIDTDKIRDVIGKGGATIRAICEETKASIDIEDDGSIKIFGETKEAAEAAKQRI. In terms of domain architecture, S1 motif spans 623–691; it reads GKIYVGKVER…NRGRIKLSIK (69 aa).

The protein belongs to the polyribonucleotide nucleotidyltransferase family. As to quaternary structure, component of the RNA degradosome, which is a multiprotein complex involved in RNA processing and mRNA degradation. It depends on Mg(2+) as a cofactor.

The protein resides in the cytoplasm. It carries out the reaction RNA(n+1) + phosphate = RNA(n) + a ribonucleoside 5'-diphosphate. Involved in mRNA degradation. Catalyzes the phosphorolysis of single-stranded polyribonucleotides processively in the 3'- to 5'-direction. This Pseudomonas putida (strain GB-1) protein is Polyribonucleotide nucleotidyltransferase.